A 366-amino-acid polypeptide reads, in one-letter code: Geranylgeranyl pyrophosphate synthase, chloroplastic/chromoplastic (366 aa).

The disordered stretch occupies residues 44–65 (KRTVSSSSSSSLITKEDNNLKS). Isopentenyl diphosphate is bound by residues K112, R115, and H144. 2 residues coordinate Mg(2+): D151 and D157. R162 serves as a coordination point for dimethylallyl diphosphate. R163 is an isopentenyl diphosphate binding site. K251, T252, Q289, K306, and K316 together coordinate dimethylallyl diphosphate.

This sequence belongs to the FPP/GGPP synthase family. Dimer. It depends on Mg(2+) as a cofactor.

Its subcellular location is the plastid. It localises to the chloroplast stroma. It is found in the chromoplast. The catalysed reaction is isopentenyl diphosphate + dimethylallyl diphosphate = (2E)-geranyl diphosphate + diphosphate. The enzyme catalyses isopentenyl diphosphate + (2E)-geranyl diphosphate = (2E,6E)-farnesyl diphosphate + diphosphate. It carries out the reaction isopentenyl diphosphate + (2E,6E)-farnesyl diphosphate = (2E,6E,10E)-geranylgeranyl diphosphate + diphosphate. The protein operates within isoprenoid biosynthesis; farnesyl diphosphate biosynthesis; farnesyl diphosphate from geranyl diphosphate and isopentenyl diphosphate: step 1/1. It functions in the pathway isoprenoid biosynthesis; geranyl diphosphate biosynthesis; geranyl diphosphate from dimethylallyl diphosphate and isopentenyl diphosphate: step 1/1. It participates in isoprenoid biosynthesis; geranylgeranyl diphosphate biosynthesis; geranylgeranyl diphosphate from farnesyl diphosphate and isopentenyl diphosphate: step 1/1. Catalyzes the trans-addition of the three molecules of IPP onto DMAPP to form geranylgeranyl pyrophosphate. The sequence is that of Geranylgeranyl pyrophosphate synthase, chloroplastic/chromoplastic (GGPS1) from Sinapis alba (White mustard).